Here is a 177-residue protein sequence, read N- to C-terminus: Large ribosomal subunit protein uL6 (177 aa).

This sequence belongs to the universal ribosomal protein uL6 family. As to quaternary structure, part of the 50S ribosomal subunit.

Its function is as follows. This protein binds to the 23S rRNA, and is important in its secondary structure. It is located near the subunit interface in the base of the L7/L12 stalk, and near the tRNA binding site of the peptidyltransferase center. This Paracoccus denitrificans (strain Pd 1222) protein is Large ribosomal subunit protein uL6.